A 172-amino-acid polypeptide reads, in one-letter code: Low molecular mass early light-inducible protein HV90, chloroplastic (172 aa).

Residues 1-38 (MATMMSMSSFAGAAVVPRSSASSFGARSLPALGRRALV) constitute a chloroplast transit peptide. Helical transmembrane passes span 106–126 (GQAW…VPLL) and 150–170 (FAML…APFI).

Belongs to the ELIP/psbS family.

Its subcellular location is the plastid. The protein resides in the chloroplast membrane. Its function is as follows. Probably involved in the integration of pigments into the mature pigment-protein complexes. The protein is Low molecular mass early light-inducible protein HV90, chloroplastic of Hordeum vulgare (Barley).